The chain runs to 412 residues: Tryptophan synthase beta chain (412 aa).

Lys92 carries the post-translational modification N6-(pyridoxal phosphate)lysine.

This sequence belongs to the TrpB family. In terms of assembly, tetramer of two alpha and two beta chains. Requires pyridoxal 5'-phosphate as cofactor.

It catalyses the reaction (1S,2R)-1-C-(indol-3-yl)glycerol 3-phosphate + L-serine = D-glyceraldehyde 3-phosphate + L-tryptophan + H2O. The protein operates within amino-acid biosynthesis; L-tryptophan biosynthesis; L-tryptophan from chorismate: step 5/5. Its function is as follows. The beta subunit is responsible for the synthesis of L-tryptophan from indole and L-serine. This Methylibium petroleiphilum (strain ATCC BAA-1232 / LMG 22953 / PM1) protein is Tryptophan synthase beta chain.